Here is a 226-residue protein sequence, read N- to C-terminus: Phosphoglycolate phosphatase (226 aa).

The active-site Nucleophile is D9. The Mg(2+) site is built by D9 and D11. Residue K150 coordinates substrate. Residues D173 and D177 each contribute to the Mg(2+) site.

Belongs to the archaeal SPP-like hydrolase family. Mg(2+) serves as cofactor.

It carries out the reaction 2-phosphoglycolate + H2O = glycolate + phosphate. Its function is as follows. Catalyzes the dephosphorylation of 2-phosphoglycolate. This chain is Phosphoglycolate phosphatase, found in Methanosarcina mazei (strain ATCC BAA-159 / DSM 3647 / Goe1 / Go1 / JCM 11833 / OCM 88) (Methanosarcina frisia).